A 294-amino-acid polypeptide reads, in one-letter code: Aquaporin NIP2-2 (294 aa).

Helical transmembrane passes span 54–74 (VISE…AASI) and 88–108 (SVAG…ISGA). The NPA 1 motif lies at 111 to 113 (NPA). Transmembrane regions (helical) follow at residues 129–151 (VPFY…KAVL), 169–189 (ALLI…AVAT), and 197–217 (LAGL…GPVS). Residues 222–224 (NPA) carry the NPA 2 motif. The chain crosses the membrane as a helical span at residues 235-255 (VFTGLWIYFLGPVIGTLSGAW).

This sequence belongs to the MIP/aquaporin (TC 1.A.8) family. NIP (TC 1.A.8.12) subfamily.

The protein localises to the membrane. Functionally, aquaporins facilitate the transport of water and small neutral solutes across cell membranes. The polypeptide is Aquaporin NIP2-2 (NIP2-2) (Zea mays (Maize)).